The chain runs to 523 residues: DNA-(apurinic or apyrimidinic site) endonuclease 2 (523 aa).

Glutamate 42 is a binding site for Mg(2+). Residue tyrosine 151 is part of the active site. 3 residues coordinate Mg(2+): aspartate 191, asparagine 193, and aspartate 294. Aspartate 191 (proton donor/acceptor) is an active-site residue. Positions 348-392 (MKKNKNNSPTQSENVSASASSGSSPTVSRANSVIDVDAYPPEKRR) are disordered. The segment covering 353 to 362 (NNSPTQSENV) has biased composition (polar residues). Positions 458, 461, 484, and 508 each coordinate Zn(2+). The GRF-type zinc finger occupies 458 to 517 (CEGHKEPCKYLTVRKPGINYGRKFWICARPVGELIKNSNAVSEEDTQPFQCRFFIWDSDW).

Belongs to the DNA repair enzymes AP/ExoA family. The cofactor is Mg(2+). It depends on Mn(2+) as a cofactor.

Its subcellular location is the nucleus. It carries out the reaction Exonucleolytic cleavage in the 3'- to 5'-direction to yield nucleoside 5'-phosphates.. DNA repair enzyme that cleaves apurinic/apyrimidinic (AP) sites and removes 3'-blocking groups present at single strand breaks of damaged DNA. Provides the majority of the AP-endonuclease (APE) activity. Repairs phleomycin D1-induced DNA damage. Plays a role in oxidative damage repair. The protein is DNA-(apurinic or apyrimidinic site) endonuclease 2 (apn2) of Schizosaccharomyces pombe (strain 972 / ATCC 24843) (Fission yeast).